The sequence spans 654 residues: Import motor subunit, mitochondrial (654 aa).

Residues 1–23 (MLAAKNILNRSSLSSSFRIATRL) constitute a mitochondrion transit peptide. Phosphothreonine is present on T330. The segment at 629 to 654 (EQLYKNDSNNNNNNNGNNAESGETKQ) is disordered. Over residues 637 to 646 (NNNNNNNGNN) the composition is skewed to low complexity.

The protein belongs to the heat shock protein 70 family. As to quaternary structure, component of the PAM complex, at least composed of SSC1 (mtHsp70), MGE1, TIM44, PAM16/TIM16, PAM17 and PAM18/TIM14. In the complex, SSC1 interacts directly with PAM18 and TIM44. Interacts with NAP1.

Its subcellular location is the mitochondrion matrix. It catalyses the reaction ATP + H2O = ADP + phosphate + H(+). In terms of biological role, essential component of the PAM complex, a complex required for the translocation of transit peptide-containing proteins from the inner membrane into the mitochondrial matrix in an ATP-dependent manner. Constitutes the ATP-driven core of the motor and binds the precursor preprotein. Required for the import of the processed frataxin homolog YFH1 into the mitochondrion. This chain is Import motor subunit, mitochondrial, found in Saccharomyces cerevisiae (strain ATCC 204508 / S288c) (Baker's yeast).